The sequence spans 405 residues: L-carnitine CoA-transferase (405 aa).

CoA contacts are provided by lysine 97 and arginine 104. Residue aspartate 169 is the Nucleophile of the active site.

It belongs to the CoA-transferase III family. CaiB subfamily. As to quaternary structure, homodimer.

Its subcellular location is the cytoplasm. The catalysed reaction is crotonobetainyl-CoA + (R)-carnitine = crotonobetaine + (R)-carnitinyl-CoA. The enzyme catalyses 4-(trimethylamino)butanoyl-CoA + (R)-carnitine = (R)-carnitinyl-CoA + 4-(trimethylamino)butanoate. It functions in the pathway amine and polyamine metabolism; carnitine metabolism. Catalyzes the reversible transfer of the CoA moiety from gamma-butyrobetainyl-CoA to L-carnitine to generate L-carnitinyl-CoA and gamma-butyrobetaine. Is also able to catalyze the reversible transfer of the CoA moiety from gamma-butyrobetainyl-CoA or L-carnitinyl-CoA to crotonobetaine to generate crotonobetainyl-CoA. The chain is L-carnitine CoA-transferase from Escherichia coli (strain K12 / MC4100 / BW2952).